The primary structure comprises 202 residues: Securin-2 (202 aa).

Positions 60–105 (TRKALGTVNRATEKSVKTNGPRKQKQPSFSAKKMTEKTVKTKSSVP) are disordered. A D-box motif is present at residues 61–64 (RKAL). The short motif at 163 to 173 (PPSPVKMPSPP) is the SH3-binding element.

The protein belongs to the securin family. In terms of tissue distribution, expressed at low levels in the pituitary, liver, spleen, prostate, testis, ovary, small intestine and colon. Also expressed in various pituitary, testicular, liver and ovarian tumors.

The protein resides in the cytoplasm. It is found in the nucleus. The chain is Securin-2 (PTTG2) from Homo sapiens (Human).